A 254-amino-acid polypeptide reads, in one-letter code: Cold shock-induced protein TIR1 (254 aa).

The first 18 residues, 1–18, serve as a signal peptide directing secretion; that stretch reads MAYTKIALFAAIAALASA. A disordered region spans residues 110–213; sequence NGDASSSAAP…SSTGAKTSAI (104 aa). Positions 113-197 are enriched in low complexity; that stretch reads ASSSAAPSSS…SAAPSSTEAK (85 aa). A run of 10 repeats spans residues 114 to 119, 120 to 125, 126 to 131, 132 to 137, 138 to 143, 144 to 155, 156 to 167, 168 to 179, 180 to 191, and 192 to 203. A 5 X 6 AA approximate tandem repeats, Ala/Ser-rich region spans residues 114-143; the sequence is SSSAAPSSSAAPTSSAAPSSSAAPTSSAAS. The segment at 144-203 is 5 X 12 AA approximate tandem repeats, Ala/Ser-rich; the sequence is SSSEAKSSSAAPSSSEAKSSSAAPSSSEAKSSSAAPSSSEAKSSSAAPSSTEAKITSAAP. The segment covering 201 to 213 has biased composition (polar residues); sequence AAPSSTGAKTSAI. One copy of the PIR1/2/3 repeat lies at 210 to 224; it reads TSAISQITDGQIQAT. The GPI-anchor amidated asparagine moiety is linked to residue asparagine 233. Residues 234-254 constitute a propeptide, removed in mature form; it reads GAAKAFVGMGAGVVAAAAMLL.

The protein belongs to the SRP1/TIP1 family. Post-translationally, O-glycosylated. In terms of processing, the GPI-anchor is attached to the protein in the endoplasmic reticulum and serves to target the protein to the cell surface. There, the glucosamine-inositol phospholipid moiety is cleaved off and the GPI-modified mannoprotein is covalently attached via its lipidless GPI glycan remnant to the 1,6-beta-glucan of the outer cell wall layer. Covalently linked to beta-1,3-glucan of the inner cell wall layer via an alkali-sensitive ester linkage between the gamma-carboxyl group of glutamic acids, arising from a specific glutamine within the PIR1/2/3 repeat, and hydroxyl groups of glucoses of beta-1,3-glucan chains.

It is found in the secreted. The protein localises to the cell wall. The protein resides in the membrane. Its function is as follows. Component of the cell wall. Required for anaerobic growth. This is Cold shock-induced protein TIR1 (TIR1) from Saccharomyces cerevisiae (strain ATCC 204508 / S288c) (Baker's yeast).